We begin with the raw amino-acid sequence, 176 residues long: Glycine-rich RNA-binding protein 7 (176 aa).

Alanine 2 is modified (N-acetylalanine). The tract at residues 2–41 (ASGDVEYRCFVGGLAWATDDRALETAFAQYGDVIDSKIIN) is required for RNA chaperone activity. The region spanning 8 to 86 (YRCFVGGLAW…RSITVNEAQS (79 aa)) is the RRM domain. Arginine 49 is subject to ADP-ribosylarginine; by HopU1. The tract at residues 83-103 (EAQSRGSGGGGGHRGGGGGGY) is disordered. The segment covering 88–103 (GSGGGGGHRGGGGGGY) has biased composition (gly residues). Residues 88 to 175 (GSGGGGGHRG…GYGGSGGGGG (88 aa)) form a glycine-rich (GR) required for cell-to-cell movement region. The segment at 97–148 (GGGGGGYRSGGGGGYSGGGGSYGGGGGRREGGGGYSGGGGGYSSRGGGGGSY) is nuclear targeting sequence (M9). 2 positions are modified to phosphoserine: serine 105 and serine 117. A disordered region spans residues 131 to 176 (YSGGGGGYSSRGGGGGSYGGGRREGGGGYGGGEGGGYGGSGGGGGW).

It belongs to the GR-RBP family. As to quaternary structure, interacts with TRN1. Interacts with the Pseudomonas syringae type III effector HopU1. Binds to small phloem-mobile single-stranded RNAs (ss-sRNA, e.g. small interfering RNA (siRNA) and microRNA (miRNA)) in the phloeme exudate, including viral-derived sRNA (vsiRNA). ADP-ribosylated by the Pseudomonas syringae type III effector HopU1. ADP-ribosylation reduces the ability of the protein to bind RNA. In terms of tissue distribution, ubiquitous with strong expression in guard cell.

The protein resides in the cytoplasm. It localises to the nucleus. The protein localises to the secreted. Functionally, plays a role in RNA transcription or processing during stress. Binds RNAs and DNAs sequence with a preference to single-stranded nucleic acids. Displays strong affinity to poly(U) and poly(G) sequence. Involved in mRNA alternative splicing of numerous targets by modulating splice site selection. Negatively regulates the circadian oscillations of its own transcript as well as RBG8 transcript. Forms an interlocked post-transcriptional negative feedback loop with the RBG8 autoregulatory circuit. Both proteins negatively autoregulate and reciprocally crossregulate by binding to their pre-mRNAs and promoting unproductive splicing coupled to degradation via the NMD pathway. Involved in the regulation of abscisic acid and stress responses. Affects the growth and stress tolerance under high salt and dehydration stress conditions, and also confers freezing tolerance, particularly via the regulation of stomatal opening and closing in the guard cells. Exhibits RNA chaperone activity during the cold adaptation process. Involved in the export of mRNAs from the nucleus to the cytoplasm under cold stress conditions. Target of the Pseudomonas syringae type III effector HopU1, which could probably be involved in plant innate immunity. Component of the flowering autonomous pathway which promotes floral transition, at least partly by down-regulating FLC. Mediates cell-to-cell trafficking of RNA interference (RNAi) signals (small RNAs (sRNA), e.g. small interfering RNA (siRNA) and microRNA (miRNA)) which regulate growth and development, as well as responses to environmental inputs, including pathogen attack; can compromise zucchini yellow mosaic virus (ZYMV) and tobacco rattle virus (TRV) infections at the early stage. The polypeptide is Glycine-rich RNA-binding protein 7 (Arabidopsis thaliana (Mouse-ear cress)).